Here is a 325-residue protein sequence, read N- to C-terminus: Chain length determinant protein (325 aa).

The Cytoplasmic segment spans residues 1 to 31; the sequence is MRVENNNVSGQNHDPEQIDLIDLLVQLWRGK. The helical transmembrane segment at 32–52 threads the bilayer; it reads MTIIISVIVAIALAIGYLAVA. At 53-294 the chain is on the periplasmic side; it reads KEKWTSTAIV…LPIRRDSPKK (242 aa). The chain crosses the membrane as a helical span at residues 295 to 315; sequence AITLILAVLLGGMVGAGIVLG. At 316–325 the chain is on the cytoplasmic side; the sequence is RNALRNYNAK.

The protein belongs to the WzzB/Cld/Rol family.

It is found in the cell inner membrane. It participates in bacterial outer membrane biogenesis; lipopolysaccharide biosynthesis. Its function is as follows. Confers a modal distribution of chain length on the O-antigen component of lipopolysaccharide (LPS). Gives rise to a reduced number of short chain molecules and increases in numbers of longer molecules. This is Chain length determinant protein (wzzB) from Shigella dysenteriae.